The chain runs to 272 residues: GPN-loop GTPase 3 (272 aa).

12–17 contributes to the GTP binding site; that stretch reads GAGKST. Residues 69–71 carry the Gly-Pro-Asn (GPN)-loop; involved in dimer interface motif; sequence GPN. A GTP-binding site is contributed by 172-175; the sequence is SKMD. Residues 253 to 272 are disordered; it reads QYGEDEEPKVPKDMDDGDFD.

This sequence belongs to the GPN-loop GTPase family. Heterodimers with GPN1 or GPN2. Binds to RNA polymerase II (RNAPII).

Small GTPase required for proper nuclear import of RNA polymerase II and III (RNAPII and RNAPIII). May act at an RNAP assembly step prior to nuclear import. The sequence is that of GPN-loop GTPase 3 from Cryptococcus neoformans var. neoformans serotype D (strain JEC21 / ATCC MYA-565) (Filobasidiella neoformans).